Consider the following 892-residue polypeptide: MTDPFCVGGRRLPGSSKSGPGKDGSRKEVRLPMLHDPPKMGMPVVRGGQTVPGQAPLCFDPGSPASDKTEGKKKGRPKAENQALRDIPLSLMNDWKDEFKAHSRVKCPNSGCWLEFPSIYGLKYHYQRCQGGAISDRLAFPCPFCEAAFTSKTQLEKHRIWNHMDRPLPASKPGPISRPVTISRPVGVSKPIGVSKPVTIGKPVGVSKPIGISKPVSVGRPMPVTKAIPVTRPVPVTKPVTVSRPMPVTKAMPVTKPITVTKSVPVTKPVPVTKPITVTKLVTVTKPVPVTKPVTVSRPIVVSKPVTVSRPIAISRHTPPCKMVLLTRSENKAPRATGRNSGKKRAADSLDTCPIPPKQARPENGEYGPSSMGQSSAFQLSADTSSGSLSPGSRPSGGMEALKAAGPASPPEEDPERTKHRRKQKTPKKFTGEQPSISGTFGLKGLVKAEDKARVHRSKKQEGPGPEDARKKVPAAPITVSKEAPAPVAHPAPGGPEEQWQRAIHERGEAVCPTCNVVTRKTLVGLKKHMEVCQKLQDALKCQHCRKQFKSKAGLNYHTMAEHSAKPSDAEASEGGEQEERERLRKVLKQMGRLRCPQEGCGAAFSSLMGYQYHQRRCGKPPCEVDSPSFPCTHCGKTYRSKAGHDYHVRSEHTAPPPEEPTDKSPEAEDPLGVERTPSGRVRRTSAQVAVFHLQEIAEDELARDWTKRRMKDDLVPETARLNYTRPGLPTLNPQLLEAWKNEVKEKGHVNCPNDCCEAIYSSVSGLKAHLASCSKGAHLAGKYRCLLCPKEFSSESGVKYHILKTHAENWFRTSADPPPKHRSQDSLVPKKEKKKNLAGGKKRGRKPKERTPEEPVAKLPPRRDDWPPGCRDKGARGSTGRKVGVSKAPEK.

The disordered stretch occupies residues 1–82 (MTDPFCVGGR…KKGRPKAENQ (82 aa)). Over residues 8–19 (GGRRLPGSSKSG) the composition is skewed to low complexity. A C2H2-type 1; atypical zinc finger spans residues 105–129 (VKCPNSGCWLEFPSIYGLKYHYQRC). The segment at 140–163 (FPCPFCEAAFTSKTQLEKHRIWNH) adopts a C2H2-type 2 zinc-finger fold. Disordered stretches follow at residues 323 to 473 (MVLL…RKKV) and 562 to 582 (EHSA…EERE). Positions 371 to 384 (SMGQSSAFQLSADT) are enriched in polar residues. The segment covering 385–398 (SSGSLSPGSRPSGG) has biased composition (low complexity). S409 is subject to Phosphoserine. Residues 418 to 428 (TKHRRKQKTPK) are compositionally biased toward basic residues. The NuRD interaction motif signature appears at 421–427 (RRKQKTP). The segment at 540–563 (LKCQHCRKQFKSKAGLNYHTMAEH) adopts a C2H2-type 3 zinc-finger fold. The C2H2-type 4; atypical zinc finger occupies 594–618 (LRCPQEGCGAAFSSLMGYQYHQRRC). The segment at 630–653 (FPCTHCGKTYRSKAGHDYHVRSEH) adopts a C2H2-type 5 zinc-finger fold. Positions 649–682 (VRSEHTAPPPEEPTDKSPEAEDPLGVERTPSGRV) are disordered. S686 bears the Phosphoserine mark. The segment at 750-774 (VNCPNDCCEAIYSSVSGLKAHLASC) adopts a C2H2-type 6; atypical zinc-finger fold. The segment at 784–807 (YRCLLCPKEFSSESGVKYHILKTH) adopts a C2H2-type 7 zinc-finger fold. The tract at residues 812–892 (FRTSADPPPK…KVGVSKAPEK (81 aa)) is disordered. Over residues 819–831 (PPKHRSQDSLVPK) the composition is skewed to basic and acidic residues. Residues 832–849 (KEKKKNLAGGKKRGRKPK) show a composition bias toward basic residues. Residues 850 to 876 (ERTPEEPVAKLPPRRDDWPPGCRDKGA) are compositionally biased toward basic and acidic residues.

This sequence belongs to the krueppel C2H2-type zinc-finger protein family. In terms of assembly, interacts (via its NuRD interaction motif) with RBBP4 of the nucleosome remodeling and deacetylase (NuRD) complex; the interaction is direct and may play a role in repressing gene expression.

The protein resides in the nucleus. Its function is as follows. Involved in transcriptional regulation by repressing gene expression. Associates with the nucleosome remodeling and histone deacetylase (NuRD) complex, which promotes transcriptional repression by histone deacetylation and nucleosome remodeling. In Homo sapiens (Human), this protein is Zinc finger protein 512B (ZNF512B).